A 279-amino-acid chain; its full sequence is Stathmin domain-containing protein 1 (279 aa).

Disordered regions lie at residues 1 to 110 and 178 to 254; these read MGCG…ERPK and AAEE…VAQM. Residue glycine 2 is the site of N-myristoyl glycine attachment. Residues 22–32 show a composition bias toward basic and acidic residues; it reads KGWEEGSKADV. Polar residues predominate over residues 34 to 45; it reads VTSSKENCSPQT. The SLD domain maps to 121–248; the sequence is QGIIQSRSKV…GEPLKRKKSE (128 aa). Composition is skewed to basic and acidic residues over residues 178–191 and 232–242; these read AAEE…EEIR and EKSDVQEGEPL.

In Mus musculus (Mouse), this protein is Stathmin domain-containing protein 1 (Stmnd1).